A 356-amino-acid polypeptide reads, in one-letter code: Histidinol-phosphate aminotransferase (356 aa).

Lysine 214 carries the post-translational modification N6-(pyridoxal phosphate)lysine.

This sequence belongs to the class-II pyridoxal-phosphate-dependent aminotransferase family. Histidinol-phosphate aminotransferase subfamily. Homodimer. The cofactor is pyridoxal 5'-phosphate.

It catalyses the reaction L-histidinol phosphate + 2-oxoglutarate = 3-(imidazol-4-yl)-2-oxopropyl phosphate + L-glutamate. The protein operates within amino-acid biosynthesis; L-histidine biosynthesis; L-histidine from 5-phospho-alpha-D-ribose 1-diphosphate: step 7/9. The chain is Histidinol-phosphate aminotransferase from Escherichia coli O8 (strain IAI1).